Consider the following 168-residue polypeptide: Pollen allergen Cro s 1 (168 aa).

The N-terminal stretch at 1–26 (MGKCQAVFLLVGALCVLSLAGVANAA) is a signal peptide. Cystine bridges form between Cys-38-Cys-109, Cys-41-Cys-153, and Cys-62-Cys-97. An N-linked (GlcNAc...) asparagine glycan is attached at Asn-64.

Belongs to the Ole e I family. Expressed in pollen.

It is found in the secreted. The sequence is that of Pollen allergen Cro s 1 from Crocus sativus (Saffron).